Consider the following 154-residue polypeptide: Interleukin-2 (154 aa).

Residues 1-20 form the signal peptide; the sequence is MCKMQLLSCIALSLVLVANS. Threonine 23 carries O-linked (GalNAc...) threonine glycosylation. Cysteine 78 and cysteine 126 are disulfide-bonded.

This sequence belongs to the IL-2 family.

It localises to the secreted. Functionally, cytokine produced by activated CD4-positive helper T-cells and to a lesser extend activated CD8-positive T-cells and natural killer (NK) cells that plays pivotal roles in the immune response and tolerance. Binds to a receptor complex composed of either the high-affinity trimeric IL-2R (IL2RA/CD25, IL2RB/CD122 and IL2RG/CD132) or the low-affinity dimeric IL-2R (IL2RB and IL2RG). Interaction with the receptor leads to oligomerization and conformation changes in the IL-2R subunits resulting in downstream signaling starting with phosphorylation of JAK1 and JAK3. In turn, JAK1 and JAK3 phosphorylate the receptor to form a docking site leading to the phosphorylation of several substrates including STAT5. This process leads to activation of several pathways including STAT, phosphoinositide-3-kinase/PI3K and mitogen-activated protein kinase/MAPK pathways. Functions as a T-cell growth factor and can increase NK-cell cytolytic activity as well. Promotes strong proliferation of activated B-cells and subsequently immunoglobulin production. Plays a pivotal role in regulating the adaptive immune system by controlling the survival and proliferation of regulatory T-cells, which are required for the maintenance of immune tolerance. Moreover, participates in the differentiation and homeostasis of effector T-cell subsets, including Th1, Th2, Th17 as well as memory CD8-positive T-cells. This is Interleukin-2 (IL2) from Mirounga angustirostris (Northern elephant seal).